The chain runs to 399 residues: MRTIDDLGELRGKTVLVRSDFNVPLDGTTITDDGRIRAALPTLKRLVDAGAKVVVTAHLGRPKGAPDPAFSLAPVAQRLGALLGTPVALAADVVGPSAHETVAALSDGDVALLENVRFDPRESSKDDAERLELARAFAELADAFVSDGFGVVHRKQASVYDVATLLPHAAGDLVLAEVTALRKATDDPERPYAVVLGGSKVSDKLGVIANLLTKADTLLIGGGMVFTFLAAQGHQVGKSLLEEDQIDTVKGYLDQAEQSGVTIVLPTDIVAAEAFAADAPHQVVAADAIPADSIGLDIGPESGEAFAAVIRGAKTVVWNGPMGVFEFDAFAAGTRAVAQGLTDATAAGAFTIVGGGDSAAAVRSLGFDEAGFSHISTGGGASLEFLEGKTLPGLAVLED.

Substrate-binding positions include 20–22, arginine 35, 58–61, arginine 117, and arginine 154; these read DFN and HLGR. ATP contacts are provided by residues lysine 204, glycine 295, glutamate 326, and 355 to 358; that span reads GGDS.

Belongs to the phosphoglycerate kinase family. As to quaternary structure, monomer.

Its subcellular location is the cytoplasm. The catalysed reaction is (2R)-3-phosphoglycerate + ATP = (2R)-3-phospho-glyceroyl phosphate + ADP. The protein operates within carbohydrate degradation; glycolysis; pyruvate from D-glyceraldehyde 3-phosphate: step 2/5. In Beutenbergia cavernae (strain ATCC BAA-8 / DSM 12333 / CCUG 43141 / JCM 11478 / NBRC 16432 / NCIMB 13614 / HKI 0122), this protein is Phosphoglycerate kinase.